The sequence spans 589 residues: (E)-beta-ocimene synthase, chloroplastic (589 aa).

The transit peptide at 1-25 (MAAHNLCFNSAFVCNVHHQKTQHFP) directs the protein to the chloroplast. The (2E,6E)-farnesyl diphosphate site is built by R302, D339, D343, R480, and N483. Mg(2+)-binding residues include D339 and D343. Positions 339 to 343 (DDIYD) match the DDXXD motif motif. N483, T487, and E491 together coordinate Mg(2+).

This sequence belongs to the terpene synthase family. Tpsb subfamily. Mg(2+) is required as a cofactor. Mn(2+) serves as cofactor. As to expression, expressed exclusively in flowers.

The protein resides in the plastid. Its subcellular location is the chloroplast. The enzyme catalyses (2E,6E)-farnesyl diphosphate = (3E,6E)-alpha-farnesene + diphosphate. It participates in secondary metabolite biosynthesis; terpenoid biosynthesis. Predominantly involved in monoterpene (C10) biosynthesis. Using GPP as substrate, the major product is (E)-beta-ocimene with minor amounts of (Z)-beta-ocimene and myrcene. Using FPP as substrate, could also be able to synthesize in vitro sesquiterpenes (C15) with (E,E)-alpha-farnesene as the major product and with (Z,E)-alpha-farnesene and (E,E)-beta-farnesene as minor products. The polypeptide is (E)-beta-ocimene synthase, chloroplastic (TPS02) (Arabidopsis thaliana (Mouse-ear cress)).